A 603-amino-acid polypeptide reads, in one-letter code: Elongation factor 4 (603 aa).

The region spanning 7–191 (DNIRNFSIVA…AIVTRLPPPK (185 aa)) is the tr-type G domain. GTP-binding positions include 19–24 (DHGKST) and 138–141 (NKVD).

Belongs to the TRAFAC class translation factor GTPase superfamily. Classic translation factor GTPase family. LepA subfamily.

It localises to the cell inner membrane. It catalyses the reaction GTP + H2O = GDP + phosphate + H(+). Required for accurate and efficient protein synthesis under certain stress conditions. May act as a fidelity factor of the translation reaction, by catalyzing a one-codon backward translocation of tRNAs on improperly translocated ribosomes. Back-translocation proceeds from a post-translocation (POST) complex to a pre-translocation (PRE) complex, thus giving elongation factor G a second chance to translocate the tRNAs correctly. Binds to ribosomes in a GTP-dependent manner. In Rhodopseudomonas palustris (strain BisA53), this protein is Elongation factor 4.